A 256-amino-acid chain; its full sequence is Imidazole glycerol phosphate synthase subunit HisF (256 aa).

Active-site residues include aspartate 12 and aspartate 131.

Belongs to the HisA/HisF family. As to quaternary structure, heterodimer of HisH and HisF.

It localises to the cytoplasm. The catalysed reaction is 5-[(5-phospho-1-deoxy-D-ribulos-1-ylimino)methylamino]-1-(5-phospho-beta-D-ribosyl)imidazole-4-carboxamide + L-glutamine = D-erythro-1-(imidazol-4-yl)glycerol 3-phosphate + 5-amino-1-(5-phospho-beta-D-ribosyl)imidazole-4-carboxamide + L-glutamate + H(+). It participates in amino-acid biosynthesis; L-histidine biosynthesis; L-histidine from 5-phospho-alpha-D-ribose 1-diphosphate: step 5/9. Functionally, IGPS catalyzes the conversion of PRFAR and glutamine to IGP, AICAR and glutamate. The HisF subunit catalyzes the cyclization activity that produces IGP and AICAR from PRFAR using the ammonia provided by the HisH subunit. This Renibacterium salmoninarum (strain ATCC 33209 / DSM 20767 / JCM 11484 / NBRC 15589 / NCIMB 2235) protein is Imidazole glycerol phosphate synthase subunit HisF.